Consider the following 159-residue polypeptide: Transcription elongation factor GreA (159 aa).

A coiled-coil region spans residues 43 to 76; it reads LSENAEYDAAREEQSQLEAKIGDLENKLASATIL.

The protein belongs to the GreA/GreB family.

In terms of biological role, necessary for efficient RNA polymerase transcription elongation past template-encoded arresting sites. The arresting sites in DNA have the property of trapping a certain fraction of elongating RNA polymerases that pass through, resulting in locked ternary complexes. Cleavage of the nascent transcript by cleavage factors such as GreA or GreB allows the resumption of elongation from the new 3'terminus. GreA releases sequences of 2 to 3 nucleotides. The polypeptide is Transcription elongation factor GreA (Chlorobaculum parvum (strain DSM 263 / NCIMB 8327) (Chlorobium vibrioforme subsp. thiosulfatophilum)).